The chain runs to 117 residues: Large ribosomal subunit protein uL18 (117 aa).

Belongs to the universal ribosomal protein uL18 family. Part of the 50S ribosomal subunit; part of the 5S rRNA/L5/L18/L25 subcomplex. Contacts the 5S and 23S rRNAs.

Functionally, this is one of the proteins that bind and probably mediate the attachment of the 5S RNA into the large ribosomal subunit, where it forms part of the central protuberance. This chain is Large ribosomal subunit protein uL18, found in Laribacter hongkongensis (strain HLHK9).